The following is a 344-amino-acid chain: UDP-3-O-acylglucosamine N-acyltransferase (344 aa).

Residue histidine 248 is the Proton acceptor of the active site.

The protein belongs to the transferase hexapeptide repeat family. LpxD subfamily. Homotrimer.

It carries out the reaction a UDP-3-O-[(3R)-3-hydroxyacyl]-alpha-D-glucosamine + a (3R)-hydroxyacyl-[ACP] = a UDP-2-N,3-O-bis[(3R)-3-hydroxyacyl]-alpha-D-glucosamine + holo-[ACP] + H(+). It functions in the pathway bacterial outer membrane biogenesis; LPS lipid A biosynthesis. In terms of biological role, catalyzes the N-acylation of UDP-3-O-acylglucosamine using 3-hydroxyacyl-ACP as the acyl donor. Is involved in the biosynthesis of lipid A, a phosphorylated glycolipid that anchors the lipopolysaccharide to the outer membrane of the cell. In Prochlorococcus marinus (strain MIT 9312), this protein is UDP-3-O-acylglucosamine N-acyltransferase.